We begin with the raw amino-acid sequence, 209 residues long: Large ribosomal subunit protein bL25 (209 aa).

Positions 188–209 (STSMEKEGEGSQEPTAAPSSEN) are disordered. Residues 199 to 209 (QEPTAAPSSEN) show a composition bias toward polar residues.

It belongs to the bacterial ribosomal protein bL25 family. CTC subfamily. Part of the 50S ribosomal subunit; part of the 5S rRNA/L5/L18/L25 subcomplex. Contacts the 5S rRNA. Binds to the 5S rRNA independently of L5 and L18.

This is one of the proteins that binds to the 5S RNA in the ribosome where it forms part of the central protuberance. The polypeptide is Large ribosomal subunit protein bL25 (Ehrlichia canis (strain Jake)).